A 616-amino-acid polypeptide reads, in one-letter code: Chaperone protein HscA (616 aa).

Belongs to the heat shock protein 70 family.

Its function is as follows. Chaperone involved in the maturation of iron-sulfur cluster-containing proteins. Has a low intrinsic ATPase activity which is markedly stimulated by HscB. Involved in the maturation of IscU. This Proteus mirabilis (strain HI4320) protein is Chaperone protein HscA.